The primary structure comprises 87 residues: Small ribosomal subunit protein eS21 (87 aa).

Belongs to the eukaryotic ribosomal protein eS21 family. As to quaternary structure, component of the small ribosomal subunit. Mature ribosomes consist of a small (40S) and a large (60S) subunit. The 40S subunit contains about 33 different proteins and 1 molecule of RNA (18S). The 60S subunit contains about 49 different proteins and 3 molecules of RNA (25S, 5.8S and 5S).

It is found in the cytoplasm. Its function is as follows. Required for the processing of the 20S rRNA-precursor to mature 18S rRNA in a late step of the maturation of 40S ribosomal subunits. Has a physiological role leading to 18S rRNA stability. This is Small ribosomal subunit protein eS21 (RPS21) from Kluyveromyces lactis (strain ATCC 8585 / CBS 2359 / DSM 70799 / NBRC 1267 / NRRL Y-1140 / WM37) (Yeast).